The chain runs to 301 residues: Large ribosomal subunit protein uL18y (301 aa).

The segment at 247 to 267 (RAEPNHKKTEKSAPKEHKRYN) is disordered. The segment covering 249 to 261 (EPNHKKTEKSAPK) has biased composition (basic and acidic residues).

It belongs to the universal ribosomal protein uL18 family. In terms of assembly, component of the large ribosomal subunit (LSU).

It localises to the cytoplasm. It is found in the nucleus. The protein resides in the nucleolus. Its subcellular location is the nucleoplasm. Component of the ribosome, a large ribonucleoprotein complex responsible for the synthesis of proteins in the cell. The small ribosomal subunit (SSU) binds messenger RNAs (mRNAs) and translates the encoded message by selecting cognate aminoacyl-transfer RNA (tRNA) molecules. The large subunit (LSU) contains the ribosomal catalytic site termed the peptidyl transferase center (PTC), which catalyzes the formation of peptide bonds, thereby polymerizing the amino acids delivered by tRNAs into a polypeptide chain. The nascent polypeptides leave the ribosome through a tunnel in the LSU and interact with protein factors that function in enzymatic processing, targeting, and the membrane insertion of nascent chains at the exit of the ribosomal tunnel. Seems involved in the regulation of cell proliferation. Essential in leaf polarity establishment, probably having a role for translation in leaf dorsoventral patterning to specify leaf adaxial identity. This chain is Large ribosomal subunit protein uL18y, found in Arabidopsis thaliana (Mouse-ear cress).